Reading from the N-terminus, the 207-residue chain is MRLESVAKFHSPKSPMMSDSPRATASDSLSGTDVMAAMGMAQSQAGFGMAAFCGKHELSQNDKQKAINYLMQFAHKVSGKYRGVAKLEGNTKAKVLQVLATFAYADYCRSAATPGARCRDCHGTGRAVDIAKTELWGRVVEKECGRCKGVGYSRMPASAAYRAVTMLIPNLTQPTWSRTVKPLYDALVVQCHKEESIADNILNAVTR.

The segment at methionine 1–serine 28 is disordered. Zn(2+) contacts are provided by cysteine 118, cysteine 121, cysteine 144, and cysteine 147. A zinc finger lies at cysteine 118–cysteine 147. The DNA-binding element occupies leucine 171–histidine 192.

It belongs to the phage antitermination Q type 2 family. As to quaternary structure, interacts with host RPOB (via flap domain); this interaction renders host RNAP resistant to transcription pausing and allows it to read through termination signals. Interacts with host RNA polymerase sigma factor RPOD (via domain-4). Interacts with host NUSA (via N-terminus and AR2 domain); this interaction releases the autoinhibition of NUSA.

Its function is as follows. Mediates the switch from middle to viral late gene expression by associating with host RNA polymerase (RNAP) so that the latter can read without pausing and through transcription terminators preceding late genes. Competes with host factor sigma 70 for binding to RPOB, the beta-subunit of host RNAP. To join the elongation complex, binds a specific DNA Q-binding element (QBE) and interacts with RNAP that is paused during early elongation. Participates in the lysis-lysogeny decision by activating the expression of the late lytic genes. This is Antitermination protein Q from Escherichia phage lambda (Bacteriophage lambda).